A 378-amino-acid polypeptide reads, in one-letter code: 3-dehydroquinate synthase (378 aa).

Residues 115 to 119 (GVVGD), 139 to 140 (TS), Lys152, and Lys161 each bind NAD(+). The Zn(2+) site is built by Glu194, His256, and His275.

It belongs to the sugar phosphate cyclases superfamily. Dehydroquinate synthase family. Co(2+) serves as cofactor. It depends on Zn(2+) as a cofactor. Requires NAD(+) as cofactor.

The protein localises to the cytoplasm. The enzyme catalyses 7-phospho-2-dehydro-3-deoxy-D-arabino-heptonate = 3-dehydroquinate + phosphate. It participates in metabolic intermediate biosynthesis; chorismate biosynthesis; chorismate from D-erythrose 4-phosphate and phosphoenolpyruvate: step 2/7. Functionally, catalyzes the conversion of 3-deoxy-D-arabino-heptulosonate 7-phosphate (DAHP) to dehydroquinate (DHQ). The polypeptide is 3-dehydroquinate synthase (Brucella abortus biovar 1 (strain 9-941)).